The primary structure comprises 247 residues: Mannose-P-dolichol utilization defect 1 protein (247 aa).

Residue Ala-2 is modified to N-acetylalanine. A run of 7 helical transmembrane segments spans residues 37 to 57 (CLKILLSKGLGLGIVAGSLLV), 74 to 94 (LSLQSVMLELVALTGTMVYSI), 100 to 120 (FSSWGEALFLMLQTITICFLV), 128 to 145 (VKGVAFLACYGLVLLVLL), 151 to 171 (LTVVTLLQASNVPAVVVGRLL), 185 to 205 (LSAITVFLLFGGSLARIFTSI), and 213 to 233 (MAGTFVVSSLCNGLIAAQLLF). The PQ-loop 1 domain maps to 39–105 (KILLSKGLGL…NNFPFSSWGE (67 aa)). In terms of domain architecture, PQ-loop 2 spans 159–216 (ASNVPAVVVGRLLQAATNYHNGHTGQLSAITVFLLFGGSLARIFTSIQETGDPLMAGT).

Belongs to the MPDU1 (TC 2.A.43.3) family.

It is found in the membrane. Functionally, required for normal utilization of mannose-dolichol phosphate (Dol-P-Man) in the synthesis of N-linked and O-linked oligosaccharides and GPI anchors. The sequence is that of Mannose-P-dolichol utilization defect 1 protein (MPDU1) from Homo sapiens (Human).